The chain runs to 726 residues: WD repeat and coiled-coil-containing protein (726 aa).

WD repeat units lie at residues 55-98 and 154-194; these read GQFE…LDKN and KSSG…LNAC. Residues 503–571 form a disordered region; the sequence is SYDGDQSPTS…SSPPNFIKHG (69 aa). Positions 506 to 515 are enriched in polar residues; sequence GDQSPTSSAN. Positions 517 to 535 are enriched in basic and acidic residues; it reads FDDKRSKLRVESLDTEPKN. Polar residues predominate over residues 550–565; the sequence is SRPTSPKSECQKSSPP. Residues 581-609 adopt a coiled-coil conformation; that stretch reads SISRNVERLCCNFAHLQQHLSELTDITRN.

In Xenopus tropicalis (Western clawed frog), this protein is WD repeat and coiled-coil-containing protein (wdcp).